Here is a 519-residue protein sequence, read N- to C-terminus: T-complex protein 11-like protein 2 (519 aa).

A disordered region spans residues 1-30 (MPFNGEKQCVGEDQPSDSDSSRFSESMASL). Serine 16 carries the post-translational modification Phosphoserine. Residues 17–29 (DSDSSRFSESMAS) show a composition bias toward low complexity.

The protein belongs to the TCP11 family. Interacts with FMNL2; this interaction promotes muscle-derived satellite cell (MDSC) migration and differentiation.

The protein localises to the cytoplasm. The protein resides in the cytoskeleton. In terms of biological role, promotes the migration of muscle-derived satellite cells (MDSCs) during differentiation throught interaction with FMNL2 and therefore may participate in microfilament assembly. The polypeptide is T-complex protein 11-like protein 2 (Homo sapiens (Human)).